The chain runs to 88 residues: Large ribosomal subunit protein eL34 (88 aa).

Belongs to the eukaryotic ribosomal protein eL34 family.

This Methanobrevibacter smithii (strain ATCC 35061 / DSM 861 / OCM 144 / PS) protein is Large ribosomal subunit protein eL34.